The primary structure comprises 246 residues: NAD-dependent protein deacetylase (246 aa).

Residues 1-246 (MKKPDIQQLK…VIEEIVNSNS (246 aa)) form the Deacetylase sirtuin-type domain. Positions 25, 36, 37, 106, 108, 109, and 124 each coordinate NAD(+). Phe36 is a nicotinamide binding site. Nicotinamide-binding residues include Ile108 and Asp109. The active-site Proton acceptor is His124. Zn(2+) is bound by residues Cys132, Cys135, Cys152, and Cys155. 4 residues coordinate NAD(+): Ser193, Ser194, Asn216, and Asp233.

Belongs to the sirtuin family. Class U subfamily. Requires Zn(2+) as cofactor.

The protein resides in the cytoplasm. The catalysed reaction is N(6)-acetyl-L-lysyl-[protein] + NAD(+) + H2O = 2''-O-acetyl-ADP-D-ribose + nicotinamide + L-lysyl-[protein]. Functionally, NAD-dependent protein deacetylase which modulates the activities of several enzymes which are inactive in their acetylated form. This Staphylococcus epidermidis (strain ATCC 35984 / DSM 28319 / BCRC 17069 / CCUG 31568 / BM 3577 / RP62A) protein is NAD-dependent protein deacetylase.